The chain runs to 669 residues: MDLRTAVYNAARDGKLQLLQKLLSGRSREELDELTGEVAGGGTPLLIAARYGHLDVVEYLVDRCGASVEAGGSVHFDGETIEGAPPLWAASAAGHLDVVRSLLRRGASVNRTTRTNSTPLRAACFDGHLEVVRYLVGEHQADLEVANRHGHTCLMISCYKGHREIARYLLEQGAQVNRRSAKGNTALHDCAESGSLEILQLLLGCKARMERDGYGMTPLLAASVTGHTNIVEYLIQEQPGQEQVAGGEAQPGLPQEDPSTSQGCAQPQGAPCCSSSPEEPLNGESYESCCPTSREAAVEALELLGATYVDKKRDLLGALKHWRRAMELRHQGGEYLPKPEPPQLVLAYDYSREVNTTEELEALITDPDEMRMQALLIRERILGPSHPDTSYYIRYRGAVYADSGNFERCIRLWKYALDMQQSNLEPLSPMTASSFLSFAELFSYVLQDRAAKGSLGTQIGFADLMGVLTKGVREVERALQLPREPGDSAQFTKALAIILHLLYLLEKVECTPSQEHLKHQTVYRLLKCAPRGKNGFTPLHMAVDKDTTNVGRYPVGRFPSLHVVKVLLDCGADPDSRDFDNNTPLHIAAQNNCPAIMNALIEAGAHMDATNAFKKTAYELLDEKLLARGTMQPFNYVTLQCLAARALDKNKIPYKGFIPEDLEAFIELH.

ANK repeat units follow at residues 2-31 (DLRT…REEL), 40-70 (GGGT…SVEA), 82-111 (EGAP…SVNR), 115-145 (TNST…DLEV), 149-178 (HGHT…QVNR), 182-211 (KGNT…RMER), and 214-243 (YGMT…GQEQ). The residue at position 108 (S108) is a Phosphoserine. The tract at residues 240–278 (GQEQVAGGEAQPGLPQEDPSTSQGCAQPQGAPCCSSSPE) is disordered. 2 TPR repeats span residues 298–332 (VEAL…RHQG) and 390–423 (SYYI…QQSN). ANK repeat units lie at residues 534 to 576 (NGFT…DPDS) and 580 to 609 (DNNT…HMDA).

Belongs to the fem-1 family. Component of a CRL2 E3 ubiquitin-protein ligase complex, also named ECS (Elongin BC-CUL2/5-SOCS-box protein) complex, composed of CUL2, Elongin BC (ELOB and ELOC), RBX1 and substrate-specific adapter FEM1A. Interacts with PTGER4. Interacts with NFKB1; the interaction is direct. In terms of processing, phosphorylated; highly phosphorylated in myoblasts and myotubes. Phosphorylation at Ser-108 promotes PGE2-EP4-mediated inhibition of inflammation. Dephosphorylated by protein phosphatase 2A (PP2A). As to expression, present in macrophages derived from peripheral blood monocytes. Also present in atheromata (at protein level).

It localises to the mitochondrion. The protein localises to the cytoplasm. It participates in protein modification; protein ubiquitination. Functionally, substrate-recognition component of a Cul2-RING (CRL2) E3 ubiquitin-protein ligase complex of the DesCEND (destruction via C-end degrons) pathway, which recognizes a C-degron located at the extreme C terminus of target proteins, leading to their ubiquitination and degradation. The C-degron recognized by the DesCEND pathway is usually a motif of less than ten residues and can be present in full-length proteins, truncated proteins or proteolytically cleaved forms. The CRL2(FEM1A) complex specifically recognizes proteins with an arginine at the C-terminus: recognizes and binds proteins ending with -Lys/Arg-Xaa-Arg and -Lys/Arg-Xaa-Xaa-Arg C-degrons, such as SIL1 or OR51B2, leading to their ubiquitination and degradation. Promotes ubiquitination and degradation of SLBP. Involved in PGE2-EP4-mediated inhibition of inflammation of macrophages via interaction with NFKB1 and PTGER4. Promotes inflammation in brain microglia through MAP2K4/MKK4-mediated signaling. The sequence is that of Protein fem-1 homolog A from Homo sapiens (Human).